A 172-amino-acid polypeptide reads, in one-letter code: Signal peptidase complex catalytic subunit SEC11 (172 aa).

Topologically, residues 1–14 are cytoplasmic; that stretch reads MLSSLANPRQAASQ. A helical; Signal-anchor for type II membrane protein transmembrane segment spans residues 15–35; the sequence is LLNFALILSTAFMMWKGLSVV. Over 36 to 172 the chain is Lumenal; sequence SDSPSPIVVV…MGLVVVLQRE (137 aa). Catalysis depends on charge relay system residues serine 49, histidine 90, and aspartate 115. Positions 158–169 are C-terminal short (CTS) helix; the sequence is AMLGIMGLVVVL.

This sequence belongs to the peptidase S26B family. In terms of assembly, component of the signal peptidase complex (SPC) composed of a catalytic subunit SEC11 and three accessory subunits SPC1, SPC2 and SPC3. The complex induces a local thinning of the ER membrane which is used to measure the length of the signal peptide (SP) h-region of protein substrates. This ensures the selectivity of the complex towards h-regions shorter than 18-20 amino acids. SPC associates with the translocon complex.

The protein resides in the endoplasmic reticulum membrane. It carries out the reaction Cleavage of hydrophobic, N-terminal signal or leader sequences from secreted and periplasmic proteins.. Functionally, catalytic component of the signal peptidase complex (SPC) which catalyzes the cleavage of N-terminal signal sequences from nascent proteins as they are translocated into the lumen of the endoplasmic reticulum. Specifically cleaves N-terminal signal peptides that contain a hydrophobic alpha-helix (h-region) shorter than 18-20 amino acids. The sequence is that of Signal peptidase complex catalytic subunit SEC11 (SEC11) from Colletotrichum graminicola (strain M1.001 / M2 / FGSC 10212) (Maize anthracnose fungus).